A 152-amino-acid chain; its full sequence is Methylglyoxal synthase (152 aa).

An MGS-like domain is found at 6-152 (RTIPAQKHIA…YQRYLQDRLK (147 aa)). Substrate is bound by residues H19, K23, 45–48 (TGTT), and 65–66 (SG). D71 acts as the Proton donor/acceptor in catalysis. H98 is a binding site for substrate.

This sequence belongs to the methylglyoxal synthase family.

It carries out the reaction dihydroxyacetone phosphate = methylglyoxal + phosphate. Functionally, catalyzes the formation of methylglyoxal from dihydroxyacetone phosphate. In Pectobacterium atrosepticum (strain SCRI 1043 / ATCC BAA-672) (Erwinia carotovora subsp. atroseptica), this protein is Methylglyoxal synthase.